Consider the following 336-residue polypeptide: F420-dependent glucose-6-phosphate dehydrogenase (336 aa).

D39 lines the coenzyme F420-(gamma-Glu)n pocket. The Proton donor role is filled by H40. Coenzyme F420-(gamma-Glu)n is bound by residues T76 and 107-108 (TG). E109 serves as the catalytic Proton acceptor. Coenzyme F420-(gamma-Glu)n-binding positions include N112, 177–178 (GG), and 180–181 (AV). Residues T195, K198, K259, and R283 each coordinate substrate.

This sequence belongs to the F420-dependent glucose-6-phosphate dehydrogenase family. Homodimer.

The catalysed reaction is oxidized coenzyme F420-(gamma-L-Glu)(n) + D-glucose 6-phosphate + H(+) = 6-phospho-D-glucono-1,5-lactone + reduced coenzyme F420-(gamma-L-Glu)(n). In terms of biological role, catalyzes the coenzyme F420-dependent oxidation of glucose 6-phosphate (G6P) to 6-phosphogluconolactone. Appears to have a role in resistance to oxidative stress, via its consumption of G6P that serves as a source of reducing power to combat oxidative stress in mycobacteria. The polypeptide is F420-dependent glucose-6-phosphate dehydrogenase (Mycobacterium avium (strain 104)).